We begin with the raw amino-acid sequence, 581 residues long: Pyridine nucleotide-disulfide oxidoreductase domain-containing protein 2 (581 aa).

V38–G71 provides a ligand contact to FAD.

This sequence belongs to the carotenoid/retinoid oxidoreductase family. As to quaternary structure, interacts with COX5B; this interaction may contribute to localize PYROXD2 to the inner face of the inner mitochondrial membrane.

It is found in the mitochondrion matrix. Functionally, probable oxidoreductase that may play a role as regulator of mitochondrial function. The protein is Pyridine nucleotide-disulfide oxidoreductase domain-containing protein 2 of Mus musculus (Mouse).